A 95-amino-acid chain; its full sequence is DNA-directed RNA polymerase subunit omega (95 aa).

Belongs to the RNA polymerase subunit omega family. The RNAP catalytic core consists of 2 alpha, 1 beta, 1 beta' and 1 omega subunit. When a sigma factor is associated with the core the holoenzyme is formed, which can initiate transcription.

The catalysed reaction is RNA(n) + a ribonucleoside 5'-triphosphate = RNA(n+1) + diphosphate. Promotes RNA polymerase assembly. Latches the N- and C-terminal regions of the beta' subunit thereby facilitating its interaction with the beta and alpha subunits. The protein is DNA-directed RNA polymerase subunit omega of Colwellia psychrerythraea (strain 34H / ATCC BAA-681) (Vibrio psychroerythus).